Reading from the N-terminus, the 279-residue chain is Glutamate racemase (279 aa).

Residues 13–14 (DS) and 45–46 (YG) each bind substrate. Cys-76 functions as the Proton donor/acceptor in the catalytic mechanism. 77–78 (NT) contributes to the substrate binding site. The active-site Proton donor/acceptor is the Cys-185. Residue 186 to 187 (TH) participates in substrate binding.

This sequence belongs to the aspartate/glutamate racemases family.

It catalyses the reaction L-glutamate = D-glutamate. The protein operates within cell wall biogenesis; peptidoglycan biosynthesis. Provides the (R)-glutamate required for cell wall biosynthesis. The sequence is that of Glutamate racemase from Synechocystis sp. (strain ATCC 27184 / PCC 6803 / Kazusa).